We begin with the raw amino-acid sequence, 234 residues long: Large ribosomal subunit protein uL1 (234 aa).

This sequence belongs to the universal ribosomal protein uL1 family. Part of the 50S ribosomal subunit.

Its function is as follows. Binds directly to 23S rRNA. The L1 stalk is quite mobile in the ribosome, and is involved in E site tRNA release. Functionally, protein L1 is also a translational repressor protein, it controls the translation of the L11 operon by binding to its mRNA. In Sulfurovum sp. (strain NBC37-1), this protein is Large ribosomal subunit protein uL1.